The chain runs to 333 residues: L-lactate dehydrogenase B chain (333 aa).

Residues 29-57 (GQVGMACAISILGKGLCDELALVDVLEDK) and R99 contribute to the NAD(+) site. Residues R106, N138, and R169 each contribute to the substrate site. NAD(+) is bound at residue N138. Residue H193 is the Proton acceptor of the active site. T248 is a substrate binding site.

This sequence belongs to the LDH/MDH superfamily. LDH family. Homotetramer.

It is found in the cytoplasm. The catalysed reaction is (S)-lactate + NAD(+) = pyruvate + NADH + H(+). It functions in the pathway fermentation; pyruvate fermentation to lactate; (S)-lactate from pyruvate: step 1/1. In terms of biological role, interconverts simultaneously and stereospecifically pyruvate and lactate with concomitant interconversion of NADH and NAD(+). This Gallus gallus (Chicken) protein is L-lactate dehydrogenase B chain (LDHB).